The following is a 795-amino-acid chain: MPAVKKPQILVVRNQVIFPYNGFELDVGRERSKKLIKALKNLKTKRLVLVTQKNSDQLNPEFDDIYHCGTLCDIDEIIEVPSEDGKTADYKIKGKGLQRVAITSFSDADLTKYDHHFLNSTLTENKALDKLLERIFPDKEDFAEILDSLNSFLELQELKKLSKVPKDIKRYDIITFKLASLIFKDITLQQAILEENDIEKRLQKIIGSGIEDLGHISEEARAKQRESEFDKIDNRITRKVNEQLSRQQRDFYLREKLRVIREEIGMTSKKEDEVSNIRKKLEENPYPEHIKKRILSELDHFENSSSSSQESTLTKTYIDTLMNLPWWQESKDNADVKNLIKILNKNHSGLDKVKERVVEYLAVQLRTKKLKGPIMCLVGPPGVGKSSLAKSIAEALNKCFVKVSLGGVHDESEIRGHRKTYLGSMPGRILKGMVRAKVINPLFLLDEIDKMTSSNQGYPSGALLEVLDPELNNKFSDNYVEEDYDLSKVMFVATANYIEDIPEALLDRMEVIELTSYTEQEKLQITKSHLVKRCLDDAEIKTDDLKFTDEGISYIIKFYTREAGVRQLERLIQQIVRKYIVNLQKTGEQQVVVDVDLVKKYLKKEIFDYTVRDEDALPGIVNGMAYTPTGGDLLPIEVTHVAGKGDLILTGNLKQTMRESASVALGYVKANAQSFNINPNLFKKVDINIHVPGGGIPKDGPSAGAALVTAIISSLTGKKVDPKIAMTGEITLRGKVMTIGGVKEKTISAYRGGVRTIFMPEKNERYLDEVPKDIVKDLEIILVKEYKDIYNKIFN.

One can recognise a Lon N-terminal domain in the interval 7–213; it reads PQILVVRNQV…KIIGSGIEDL (207 aa). An ATP-binding site is contributed by 379–386; that stretch reads GPPGVGKS. Positions 615 to 795 constitute a Lon proteolytic domain; that stretch reads DALPGIVNGM…YKDIYNKIFN (181 aa). Active-site residues include S702 and K745.

It belongs to the peptidase S16 family. In terms of assembly, homohexamer. Organized in a ring with a central cavity.

Its subcellular location is the cytoplasm. The enzyme catalyses Hydrolysis of proteins in presence of ATP.. Functionally, ATP-dependent serine protease that mediates the selective degradation of mutant and abnormal proteins as well as certain short-lived regulatory proteins. Required for cellular homeostasis and for survival from DNA damage and developmental changes induced by stress. Degrades polypeptides processively to yield small peptide fragments that are 5 to 10 amino acids long. Binds to DNA in a double-stranded, site-specific manner. The protein is Lon protease of Mycoplasma pneumoniae (strain ATCC 29342 / M129 / Subtype 1) (Mycoplasmoides pneumoniae).